A 121-amino-acid chain; its full sequence is Phosphoribosyl-AMP cyclohydrolase (121 aa).

Asp74 lines the Mg(2+) pocket. Position 75 (Cys75) interacts with Zn(2+). Residues Asp76 and Asp78 each coordinate Mg(2+). Cys91 and Cys98 together coordinate Zn(2+).

The protein belongs to the PRA-CH family. In terms of assembly, homodimer. The cofactor is Mg(2+). Requires Zn(2+) as cofactor.

The protein localises to the cytoplasm. It catalyses the reaction 1-(5-phospho-beta-D-ribosyl)-5'-AMP + H2O = 1-(5-phospho-beta-D-ribosyl)-5-[(5-phospho-beta-D-ribosylamino)methylideneamino]imidazole-4-carboxamide. The protein operates within amino-acid biosynthesis; L-histidine biosynthesis; L-histidine from 5-phospho-alpha-D-ribose 1-diphosphate: step 3/9. Catalyzes the hydrolysis of the adenine ring of phosphoribosyl-AMP. The chain is Phosphoribosyl-AMP cyclohydrolase from Methanothrix thermoacetophila (strain DSM 6194 / JCM 14653 / NBRC 101360 / PT) (Methanosaeta thermophila).